The chain runs to 430 residues: Adenylosuccinate synthetase (430 aa).

GTP-binding positions include 12 to 18 and 40 to 42; these read GDEGKGK and GHT. The active-site Proton acceptor is the D13. Positions 13 and 40 each coordinate Mg(2+). Residues 13–16, 38–41, T130, R144, Q224, T239, and R303 contribute to the IMP site; these read DEGK and NAGH. The Proton donor role is filled by H41. 299–305 serves as a coordination point for substrate; that stretch reads TVTGRKR. GTP-binding positions include R305, 331–333, and 413–415; these read KLD and STS.

It belongs to the adenylosuccinate synthetase family. In terms of assembly, homodimer. It depends on Mg(2+) as a cofactor.

The protein localises to the cytoplasm. The enzyme catalyses IMP + L-aspartate + GTP = N(6)-(1,2-dicarboxyethyl)-AMP + GDP + phosphate + 2 H(+). The protein operates within purine metabolism; AMP biosynthesis via de novo pathway; AMP from IMP: step 1/2. Functionally, plays an important role in the de novo pathway of purine nucleotide biosynthesis. Catalyzes the first committed step in the biosynthesis of AMP from IMP. The protein is Adenylosuccinate synthetase of Cereibacter sphaeroides (strain ATCC 17023 / DSM 158 / JCM 6121 / CCUG 31486 / LMG 2827 / NBRC 12203 / NCIMB 8253 / ATH 2.4.1.) (Rhodobacter sphaeroides).